The sequence spans 293 residues: MATFSGPAGPILSLNPQEDVEFQKEVAQVRKRITQRKKQEQLTPGVVYVRHLPNLLDETQIFSYFSQFGTVTRFRLSRSKRTGNSKGYAFVEFESEDVAKIVAETMNNYLFGERLLECHFMPPEKVHKELFKDWNIPFKQPSYPSVKRYNRNRTLTQKLRMEERFKKKERLLRKKLAKKGIDYDFPSLILQKTESISKTNRQTSTKGQVLRKKKKKVSGTLDTPEKTVDSQGPTPVCTPTFLERRKSQVAELNDDDKDDEIVFKQPISCVKEEIQETQTPTHSRKKRRRSSNQ.

Residue Ala2 is modified to N-acetylalanine. A Glycyl lysine isopeptide (Lys-Gly) (interchain with G-Cter in SUMO2) cross-link involves residue Lys38. The 79-residue stretch at 45 to 123 (GVVYVRHLPN…RLLECHFMPP (79 aa)) folds into the RRM domain. Arg114 is modified (omega-N-methylarginine; by PRMT1 and PRMT8). Lys139 participates in a covalent cross-link: Glycyl lysine isopeptide (Lys-Gly) (interchain with G-Cter in SUMO2). The residue at position 145 (Ser145) is a Phosphoserine. Glycyl lysine isopeptide (Lys-Gly) (interchain with G-Cter in SUMO2) cross-links involve residues Lys179 and Lys192. Residues 197 to 207 (SKTNRQTSTKG) are compositionally biased toward polar residues. Positions 197-239 (SKTNRQTSTKGQVLRKKKKKVSGTLDTPEKTVDSQGPTPVCTP) are disordered. Phosphoserine is present on Ser218. Thr223 bears the Phosphothreonine mark. The tract at residues 226–269 (KTVDSQGPTPVCTPTFLERRKSQVAELNDDDKDDEIVFKQPISC) is interaction with MKI67. Ser230 carries the post-translational modification Phosphoserine. Residues Thr234 and Thr238 each carry the phosphothreonine modification. 2 positions are modified to omega-N-methylated arginine; by PRMT1 and PRMT8: Arg244 and Arg245. At Ser247 the chain carries Phosphoserine. Residue Lys271 forms a Glycyl lysine isopeptide (Lys-Gly) (interchain with G-Cter in SUMO1); alternate linkage. Lys271 is covalently cross-linked (Glycyl lysine isopeptide (Lys-Gly) (interchain with G-Cter in SUMO2); alternate). The segment at 271-293 (KEEIQETQTPTHSRKKRRRSSNQ) is disordered. Position 279 is a phosphothreonine (Thr279). Basic residues predominate over residues 282-293 (HSRKKRRRSSNQ). The residue at position 284 (Arg284) is an Omega-N-methylarginine; by PRMT1 and PRMT8.

Binds to the FHA domain of MKI67; this interaction is enhanced in mitosis. Sequentially phosphorylated on Thr-238, Thr-234 and Ser-230. Thr-234 is phosphorylated only when Thr-238 is phosphorylated. Likewise, phosphorylation at Ser-230 requires that Thr-234 and Thr-238 are phosphorylated. Phosphorylation enhances MKI67 binding.

It localises to the nucleus. The protein localises to the nucleolus. It is found in the chromosome. This is MKI67 FHA domain-interacting nucleolar phosphoprotein (NIFK) from Homo sapiens (Human).